Consider the following 136-residue polypeptide: Large ribosomal subunit protein uL22 (136 aa).

It belongs to the universal ribosomal protein uL22 family. In terms of assembly, part of the 50S ribosomal subunit.

In terms of biological role, this protein binds specifically to 23S rRNA; its binding is stimulated by other ribosomal proteins, e.g. L4, L17, and L20. It is important during the early stages of 50S assembly. It makes multiple contacts with different domains of the 23S rRNA in the assembled 50S subunit and ribosome. The globular domain of the protein is located near the polypeptide exit tunnel on the outside of the subunit, while an extended beta-hairpin is found that lines the wall of the exit tunnel in the center of the 70S ribosome. The polypeptide is Large ribosomal subunit protein uL22 (Bacteroides fragilis (strain YCH46)).